Consider the following 117-residue polypeptide: Large ribosomal subunit protein uL18 (117 aa).

It belongs to the universal ribosomal protein uL18 family. As to quaternary structure, part of the 50S ribosomal subunit; part of the 5S rRNA/L5/L18/L25 subcomplex. Contacts the 5S and 23S rRNAs.

In terms of biological role, this is one of the proteins that bind and probably mediate the attachment of the 5S RNA into the large ribosomal subunit, where it forms part of the central protuberance. This chain is Large ribosomal subunit protein uL18, found in Polynucleobacter necessarius subsp. necessarius (strain STIR1).